A 320-amino-acid chain; its full sequence is uncharacterized protein (320 aa).

The interval 1–40 (MDHPSTSSLPRKKVKAGVKKAGKKTGKKTTGKKKTTPSAI) is disordered. Over residues 10 to 35 (PRKKVKAGVKKAGKKTGKKTTGKKKT) the composition is skewed to basic residues. Residues 51–71 (LLVLLAVLSYLAALSLGLYIM) form a helical membrane-spanning segment. Residues Asn-92, Asn-122, Asn-154, and Asn-167 are each glycosylated (N-linked (GlcNAc...) asparagine). Helical transmembrane passes span 186–206 (PLVH…AMTG) and 216–236 (MLVT…VTVL). Asn-247 is a glycosylation site (N-linked (GlcNAc...) asparagine). The chain crosses the membrane as a helical span at residues 272–292 (VQGALVAIVAVFYLTMGVVFV).

It localises to the membrane. The protein operates within secondary metabolite biosynthesis; terpenoid biosynthesis. Functionally, part of the gene cluster that mediates the biosynthesis of an ophiobolin family sesterterpenoid. This is an uncharacterized protein from Aspergillus terreus.